The chain runs to 160 residues: M-phase phosphoprotein 6 (160 aa).

Glycyl lysine isopeptide (Lys-Gly) (interchain with G-Cter in SUMO2) cross-links involve residues Lys-37 and Lys-86. Ser-110 carries the post-translational modification Phosphoserine. The short motif at 116–133 is the Nuclear localization signal element; the sequence is RRYETLVGTIGKKFARKR. Lys-127 is covalently cross-linked (Glycyl lysine isopeptide (Lys-Gly) (interchain with G-Cter in SUMO2)). Thr-147 is modified (phosphothreonine). Glycyl lysine isopeptide (Lys-Gly) (interchain with G-Cter in SUMO2) cross-links involve residues Lys-150 and Lys-153.

It belongs to the MPP6 family. Associates with the RNA exosome complex, mediated by EXOSC3. Interacts with ARHGAP18. Interacts with exosome cofactors EXOSC10 and MTREX. Phosphorylated in M (mitotic) phase.

It is found in the nucleus. The protein localises to the nucleolus. It localises to the cytoplasm. Its function is as follows. RNA-binding protein that associates with the RNA exosome complex. Involved in the 3'-processing of the 7S pre-RNA to the mature 5.8S rRNA and play a role in recruiting the RNA exosome complex to pre-rRNA; this function may include C1D. This chain is M-phase phosphoprotein 6, found in Homo sapiens (Human).